The following is a 118-amino-acid chain: UPF0125 protein RSc1426 (118 aa).

The protein belongs to the UPF0125 (RnfH) family.

The polypeptide is UPF0125 protein RSc1426 (Ralstonia nicotianae (strain ATCC BAA-1114 / GMI1000) (Ralstonia solanacearum)).